Reading from the N-terminus, the 421-residue chain is Trimethyllysine dioxygenase, mitochondrial (421 aa).

The N-terminal 15 residues, 1-15, are a transit peptide targeting the mitochondrion; the sequence is MWYHKLLHQQSRLQN. N6-acetyllysine is present on residues K179 and K236. Positions 242, 244, and 389 each coordinate Fe cation.

This sequence belongs to the gamma-BBH/TMLD family. Homodimer. Fe(2+) serves as cofactor. Requires L-ascorbate as cofactor.

It localises to the mitochondrion matrix. It carries out the reaction N(6),N(6),N(6)-trimethyl-L-lysine + 2-oxoglutarate + O2 = (3S)-3-hydroxy-N(6),N(6),N(6)-trimethyl-L-lysine + succinate + CO2. It functions in the pathway amine and polyamine biosynthesis; carnitine biosynthesis. Functionally, converts trimethyllysine (TML) into hydroxytrimethyllysine (HTML). This Rattus norvegicus (Rat) protein is Trimethyllysine dioxygenase, mitochondrial (Tmlhe).